The sequence spans 1399 residues: MKDLLNLLKNQGQVEEFDAIRIGLASPEMIRSWSFGEVKKPETINYRTFKPERDGLFCAKIFGPVKDYECLCGKYKRLKHRGVICEKCGVEVALAKVRRERMAHIELASPVAHIWFLKSLPSRIGLLMDMTLRDIERVLYFESYVVIDPGMTTLEKGQLLNDEQYFEALEEFGDDFDARMGAEAVRELLHAIDLEHEIGRLREEIPQTNSETKIKKLSKRLKLMEAFQGSGNLPEWMVLTVLPVLPPDLRPLVPLDGGRFATSDLNDLYRRVINRNNRLKRLLDLSAPDIIVRNEKRMLQEAVDALLDNGRRGRAITGSNKRPLKSLADMIKGKQGRFRQNLLGKRVDYSGRSVITVGPTLRLHQCGLPKKMALELFKPFIFGKLEMRGLATTIKAAKKMVERELPEVWDVLAEVIREHPVLLNRAPTLHRLGIQAFEPVLIEGKAIQLHPLVCAAYNADFDGDQMAVHVPLTLEAQLEARALMMSTNNILSPANGEPIIVPSQDVVLGLYYMTREAINAKGEGRVFADLQEVDRVFRAGEAALHAKIKVRINETVKERDGSVVKNTRIVDTTVGRALLFQVVPAGLPYDVVNQPMKKKAISKLINQCYRVVGLKETVIFADQLMYTGFAYSTISGVSIGVNDFVIPDEKARIIGNATDEVKEIESQYASGLVTQGEKYNKVIDLWSKANDEVSKAMMANLSKEKVIDREGKEVEQESFNSMYMMADSGARGSAAQIRQLAGMRGLMAKPDGSIIETPITANFREGLSVLQYFISTHGARKGLADTALKTANSGYLTRRLVDVAQDLVVTEIDCGTDQGLVMTPHIEGGDVVEPLGERVLGRVIARDVFKPGTEDVIVPAGTLVDEQWVEFIELNSIDEVIVRSPINCETRYGICAKCYGRDLARGHQVNIGEAVGVIAAQSIGEPGTQLTMRTFHIGGAASRTSAADSVQVKNGGMVRLHNLKQVERADGNLVAVSRSGELAIADEFGRERERYKLPYGAVISVKEGEKVEAGAIVAKWDPHTHPIVTELKGTVTFVGMEENITIKRQTDELTGLTNIEVLDVKDRPAAGKEIRPAIKMVDAAGKDLYLPGTDVPAQYFLPANALVGVADGAQIGVGDVIARIPQETSKTRDITGGLPRVADLFEARRPKEASILAEVSGTIAFGKETKGKRRLVITPTDGSEPYEELIPKWRHLNVFEGEQVNRGEVISDGPSDPHDILRLLGVSALAKYIVNEIQDVYRLQGVKINDKHIETILRQMLRKVEISESGDSSFIKGDQMELTQVLVENERLASEDKFISKFTRVLLGITKASLSTESFISAASFQETTRVLTEAAVTGKRDYLRGLKENVVVGRLIPAGTGLAYHSERKRRRDADKPLRVSASEVEAALTEALNSSGN.

Zn(2+)-binding residues include Cys-70, Cys-72, Cys-85, and Cys-88. Positions 460, 462, and 464 each coordinate Mg(2+). Zn(2+)-binding residues include Cys-814, Cys-888, Cys-895, and Cys-898.

The protein belongs to the RNA polymerase beta' chain family. In terms of assembly, the RNAP catalytic core consists of 2 alpha, 1 beta, 1 beta' and 1 omega subunit. When a sigma factor is associated with the core the holoenzyme is formed, which can initiate transcription. It depends on Mg(2+) as a cofactor. Zn(2+) serves as cofactor.

It catalyses the reaction RNA(n) + a ribonucleoside 5'-triphosphate = RNA(n+1) + diphosphate. DNA-dependent RNA polymerase catalyzes the transcription of DNA into RNA using the four ribonucleoside triphosphates as substrates. In Pseudomonas putida (strain ATCC 47054 / DSM 6125 / CFBP 8728 / NCIMB 11950 / KT2440), this protein is DNA-directed RNA polymerase subunit beta'.